We begin with the raw amino-acid sequence, 297 residues long: Acetylglutamate kinase (297 aa).

Substrate-binding positions include 72–73 (GG), arginine 94, and asparagine 193.

Belongs to the acetylglutamate kinase family. ArgB subfamily.

Its subcellular location is the cytoplasm. The catalysed reaction is N-acetyl-L-glutamate + ATP = N-acetyl-L-glutamyl 5-phosphate + ADP. Its pathway is amino-acid biosynthesis; L-arginine biosynthesis; N(2)-acetyl-L-ornithine from L-glutamate: step 2/4. Catalyzes the ATP-dependent phosphorylation of N-acetyl-L-glutamate. This Mycobacterium leprae (strain TN) protein is Acetylglutamate kinase.